Here is a 315-residue protein sequence, read N- to C-terminus: MEHFIDTYLYELRKVRDEKTIKKKEYLLKHLQDYSEDLPAFDQSEIFSFYEYLKNKNLKETTIRDILKEVRLFYEWLQEQGLNLKFDEKALKKLFQSKKSQEALKSKKKYYSDDEINLILNAIRGAVEGISTKHPIYYILTIFLLCSGLRISEAVKVRKKDFEVKRILTEEGEEKEVWFVKVREGKFGKERKALIYFFRPEWKRIFEERLKKLKPEDFFFTYAVKYPKSVKVFTLTDKTAKWFYWKLEKELREKGYEIEVNAHRFRNTYITKLATKGFPVNLIADWVGHSKISTTMDVYMEAEREKQLEAILERI.

Residues 1–78 (MEHFIDTYLY…EVRLFYEWLQ (78 aa)) form the Core-binding (CB) domain. The region spanning 106-313 (SKKKYYSDDE…REKQLEAILE (208 aa)) is the Tyr recombinase domain. Catalysis depends on residues arginine 150, lysine 186, histidine 263, arginine 266, and histidine 289. Tyrosine 299 (O-(3'-phospho-DNA)-tyrosine intermediate) is an active-site residue.

It belongs to the 'phage' integrase family.

May function as an integrase. In Aquifex aeolicus (strain VF5), this protein is Probable integrase/recombinase aq_aa09.